Consider the following 403-residue polypeptide: MSKFNRIHLVVLDSVGIGAAPDADKFFNAGVADTDSDTLGHISETAGLAVPNMAKIGLGHIPRPVPLKTVPAEADPTGYVTKLEEVSLGKDTMTGHWEIMGLNITEPFDTFWDGFPEEIIQKIEAFSGRKVIREANKPYSGTKVIDDFGPRQMETGELIVYTSADPVLQIAAHEEVIPIEELYRICEYARSITLERPALLGRIIARPYVGEPGNFTRTANRRDYAVSPFQDTVLNKLADAGISTYAVGKINDIFNGSGITNDMGHNKSNSHGIDTLIKTLQLPAFTKGLSFTNLVDFDASFGHRRDPEGYRDCLHEFDRRLPEIIANMKDDDLLLITADHGNDPTYAGTDHTREYIPLLAYSASCTGAGVIPQGHFADISATIAENFGVDTAMIGTSFLADLV.

6 residues coordinate Mn(2+): D13, D298, H303, D339, H340, and H351.

Belongs to the phosphopentomutase family. It depends on Mn(2+) as a cofactor.

It localises to the cytoplasm. The catalysed reaction is 2-deoxy-alpha-D-ribose 1-phosphate = 2-deoxy-D-ribose 5-phosphate. It carries out the reaction alpha-D-ribose 1-phosphate = D-ribose 5-phosphate. It participates in carbohydrate degradation; 2-deoxy-D-ribose 1-phosphate degradation; D-glyceraldehyde 3-phosphate and acetaldehyde from 2-deoxy-alpha-D-ribose 1-phosphate: step 1/2. In terms of biological role, isomerase that catalyzes the conversion of deoxy-ribose 1-phosphate (dRib-1-P) and ribose 1-phosphate (Rib-1-P) to deoxy-ribose 5-phosphate (dRib-5-P) and ribose 5-phosphate (Rib-5-P), respectively. The chain is Phosphopentomutase from Streptococcus equi subsp. zooepidemicus (strain MGCS10565).